The following is a 79-amino-acid chain: ATP synthase subunit c (79 aa).

Transmembrane regions (helical) follow at residues 11 to 31 and 53 to 73; these read IAVA…IGIL and FFVV…LGLY.

Belongs to the ATPase C chain family. F-type ATPases have 2 components, F(1) - the catalytic core - and F(0) - the membrane proton channel. F(1) has five subunits: alpha(3), beta(3), gamma(1), delta(1), epsilon(1). F(0) has three main subunits: a(1), b(2) and c(10-14). The alpha and beta chains form an alternating ring which encloses part of the gamma chain. F(1) is attached to F(0) by a central stalk formed by the gamma and epsilon chains, while a peripheral stalk is formed by the delta and b chains.

It is found in the cell membrane. In terms of biological role, f(1)F(0) ATP synthase produces ATP from ADP in the presence of a proton or sodium gradient. F-type ATPases consist of two structural domains, F(1) containing the extramembraneous catalytic core and F(0) containing the membrane proton channel, linked together by a central stalk and a peripheral stalk. During catalysis, ATP synthesis in the catalytic domain of F(1) is coupled via a rotary mechanism of the central stalk subunits to proton translocation. Functionally, key component of the F(0) channel; it plays a direct role in translocation across the membrane. A homomeric c-ring of between 10-14 subunits forms the central stalk rotor element with the F(1) delta and epsilon subunits. In Buchnera aphidicola subsp. Acyrthosiphon pisum (strain 5A), this protein is ATP synthase subunit c.